The chain runs to 412 residues: Putative competence-damage inducible protein (412 aa).

This sequence belongs to the CinA family.

The protein is Putative competence-damage inducible protein of Bacillus cereus (strain AH820).